The following is a 913-amino-acid chain: Zinc finger protein 112 (913 aa).

One can recognise a KRAB domain in the interval 8–79; sequence VTFKDVAVVF…ETETPRDGCS (72 aa). Lys256 participates in a covalent cross-link: Glycyl lysine isopeptide (Lys-Gly) (interchain with G-Cter in SUMO2). A C2H2-type 1; degenerate zinc finger spans residues 258-280; that stretch reads YPCTGYRKAFSNDSSSEVHQQFH. The segment at 443–465 adopts a C2H2-type 2; degenerate zinc-finger fold; it reads YNSEECGNGFSLASHFQDLQIVH. Residues 471–493 form a C2H2-type 3; degenerate zinc finger; it reads YKRYVCSNSFSHNLYLQGHPKIH. The C2H2-type 4; degenerate zinc-finger motif lies at 497–519; that stretch reads KPRKEHGNGFNWSSKLKDHQRVH. C2H2-type zinc fingers lie at residues 525-547, 553-575, 581-603, 609-631, 637-659, 665-687, 693-715, 721-743, 749-771, 777-799, 805-827, 833-855, and 861-883; these read YKCN…QRVH, YKCE…QRVH, FKCE…QRVH, YQCD…QSVH, YICE…QRVH, YKCE…RRVH, YKCE…HRVH, and YKCD…QRVH. A Glycyl lysine isopeptide (Lys-Gly) (interchain with G-Cter in SUMO2) cross-link involves residue Lys890.

It belongs to the krueppel C2H2-type zinc-finger protein family.

The protein resides in the nucleus. May be involved in transcriptional regulation. The chain is Zinc finger protein 112 (ZNF112) from Homo sapiens (Human).